The following is a 132-amino-acid chain: DNA-directed RNA polymerase subunit Rpo8 (132 aa).

It belongs to the archaeal Rpo8 RNA polymerase subunit family. Part of the 13-subunit RNA polymerase complex.

The protein resides in the cytoplasm. The catalysed reaction is RNA(n) + a ribonucleoside 5'-triphosphate = RNA(n+1) + diphosphate. DNA-dependent RNA polymerase (RNAP) catalyzes the transcription of DNA into RNA using the four ribonucleoside triphosphates as substrates. The protein is DNA-directed RNA polymerase subunit Rpo8 of Saccharolobus solfataricus (strain ATCC 35092 / DSM 1617 / JCM 11322 / P2) (Sulfolobus solfataricus).